The primary structure comprises 163 residues: Ubiquitin-like protein 1-ribosomal protein eS31 fusion protein (163 aa).

The region spanning Met1 to Gly70 is the Ubiquitin-like domain. Residue Gly70 forms a Glycyl lysine isopeptide (Gly-Lys) (interchain with K-? in acceptor proteins) linkage. A C4-type zinc finger spans residues Cys115–Cys138.

It in the N-terminal section; belongs to the ubiquitin family. The protein in the C-terminal section; belongs to the eukaryotic ribosomal protein eS31 family.

This is Ubiquitin-like protein 1-ribosomal protein eS31 fusion protein (ubl-1) from Caenorhabditis briggsae.